Here is a 398-residue protein sequence, read N- to C-terminus: Deoxyguanosinetriphosphate triphosphohydrolase-like protein (398 aa).

Residues 68-215 (RLTHTLEVAQ…AAISDDIAYD (148 aa)) form the HD domain.

It belongs to the dGTPase family. Type 2 subfamily.

This is Deoxyguanosinetriphosphate triphosphohydrolase-like protein from Azorhizobium caulinodans (strain ATCC 43989 / DSM 5975 / JCM 20966 / LMG 6465 / NBRC 14845 / NCIMB 13405 / ORS 571).